We begin with the raw amino-acid sequence, 153 residues long: Small ribosomal subunit protein uS11 (153 aa).

It belongs to the universal ribosomal protein uS11 family.

This Chlamydomonas reinhardtii (Chlamydomonas smithii) protein is Small ribosomal subunit protein uS11 (RPS14).